The primary structure comprises 281 residues: Undecaprenyl-diphosphatase (281 aa).

7 helical membrane-spanning segments follow: residues 4 to 24 (ILLL…FLPI), 46 to 63 (AFEV…CWEF), 83 to 103 (FVLN…LFGK), 108 to 128 (VLFS…IIFW), 187 to 207 (AVAT…ATAY), 222 to 242 (EFTL…FVCV), and 257 to 277 (FAWY…TGLI).

This sequence belongs to the UppP family.

It localises to the cell inner membrane. The catalysed reaction is di-trans,octa-cis-undecaprenyl diphosphate + H2O = di-trans,octa-cis-undecaprenyl phosphate + phosphate + H(+). In terms of biological role, catalyzes the dephosphorylation of undecaprenyl diphosphate (UPP). Confers resistance to bacitracin. The sequence is that of Undecaprenyl-diphosphatase from Polynucleobacter necessarius subsp. necessarius (strain STIR1).